The sequence spans 159 residues: NADH-quinone oxidoreductase subunit I (159 aa).

2 consecutive 4Fe-4S ferredoxin-type domains span residues 51–80 (RRYE…IEAD) and 90–119 (TRYD…EGPN). [4Fe-4S] cluster is bound by residues cysteine 60, cysteine 63, cysteine 66, cysteine 70, cysteine 99, cysteine 102, cysteine 105, and cysteine 109.

This sequence belongs to the complex I 23 kDa subunit family. In terms of assembly, NDH-1 is composed of 14 different subunits. Subunits NuoA, H, J, K, L, M, N constitute the membrane sector of the complex. Requires [4Fe-4S] cluster as cofactor.

It localises to the cell inner membrane. It catalyses the reaction a quinone + NADH + 5 H(+)(in) = a quinol + NAD(+) + 4 H(+)(out). Functionally, NDH-1 shuttles electrons from NADH, via FMN and iron-sulfur (Fe-S) centers, to quinones in the respiratory chain. The immediate electron acceptor for the enzyme in this species is believed to be ubiquinone. Couples the redox reaction to proton translocation (for every two electrons transferred, four hydrogen ions are translocated across the cytoplasmic membrane), and thus conserves the redox energy in a proton gradient. The protein is NADH-quinone oxidoreductase subunit I of Rickettsia rickettsii (strain Sheila Smith).